The chain runs to 1065 residues: WD repeat-containing protein on Y chromosome (1065 aa).

WD repeat units follow at residues 153–197 (EEVT…IRTA), 326–365 (RVPL…EPSA), 369–408 (GHNG…LLQT), 459–498 (THAA…RKII), 511–550 (IIDI…VVRN), 598–638 (FHTD…RRYS), 745–784 (KTGD…VPEA), and 828–867 (AHLK…LGTL). The segment covering 915–925 (PAKRAEVKAPE) has biased composition (basic and acidic residues). Disordered regions lie at residues 915–936 (PAKR…QTDD) and 1024–1065 (GSAL…QQSE). Residues 926-936 (DRDEETAQTDD) show a composition bias toward acidic residues.

The polypeptide is WD repeat-containing protein on Y chromosome (Drosophila persimilis (Fruit fly)).